The sequence spans 98 residues: Large ribosomal subunit protein eL14 (98 aa).

It belongs to the eukaryotic ribosomal protein eL14 family.

The polypeptide is Large ribosomal subunit protein eL14 (Thermofilum pendens (strain DSM 2475 / Hrk 5)).